The following is a 413-amino-acid chain: Arginine biosynthesis bifunctional protein ArgJ, mitochondrial (413 aa).

Positions 168, 194, 205, and 292 each coordinate substrate. The active-site Nucleophile is T205.

Belongs to the ArgJ family. As to quaternary structure, heterodimer of an alpha and a beta chain. The alpha and beta chains are autoproteolytically processed from a single precursor protein within the mitochondrion.

The protein resides in the mitochondrion matrix. It catalyses the reaction N(2)-acetyl-L-ornithine + L-glutamate = N-acetyl-L-glutamate + L-ornithine. The enzyme catalyses L-glutamate + acetyl-CoA = N-acetyl-L-glutamate + CoA + H(+). It functions in the pathway amino-acid biosynthesis; L-arginine biosynthesis; L-ornithine and N-acetyl-L-glutamate from L-glutamate and N(2)-acetyl-L-ornithine (cyclic): step 1/1. The protein operates within amino-acid biosynthesis; L-arginine biosynthesis; N(2)-acetyl-L-ornithine from L-glutamate: step 1/4. Catalyzes two activities which are involved in the cyclic version of arginine biosynthesis: the synthesis of acetylglutamate from glutamate and acetyl-CoA, and of ornithine by transacetylation between acetylornithine and glutamate. The sequence is that of Arginine biosynthesis bifunctional protein ArgJ, mitochondrial from Clavispora lusitaniae (strain ATCC 42720) (Yeast).